A 337-amino-acid polypeptide reads, in one-letter code: Fructose-1,6-bisphosphatase class 1 (337 aa).

The Mg(2+) site is built by Glu94, Asp116, Leu118, and Asp119. Residues 119–122 (DGSS), Asn210, and Lys276 each bind substrate. Glu282 is a Mg(2+) binding site.

This sequence belongs to the FBPase class 1 family. In terms of assembly, homotetramer. It depends on Mg(2+) as a cofactor.

The protein localises to the cytoplasm. It catalyses the reaction beta-D-fructose 1,6-bisphosphate + H2O = beta-D-fructose 6-phosphate + phosphate. It participates in carbohydrate biosynthesis; gluconeogenesis. The chain is Fructose-1,6-bisphosphatase class 1 from Burkholderia cenocepacia (strain HI2424).